Reading from the N-terminus, the 387-residue chain is MDKADRDAVIEHATQVKRLVHDPHSFLTELVAQQQQYHCIAWLCHFNILSNIPQPPESIAYSDVATKAQVPLSKLQSVARMAMTTGLLSETKDGKLSHNTLSAQFITNVHMKTQLLHIVNQTVPLMTGLIQATWKWGETSATNETAYNIIHGTELSFFEHLKTRPDLNEGFQAYMKSRAVSHTGSNVEHLLNAFDWKALGQAQVVDIGGSSGSTSIMLATAFPLLNLVIEDLPEPIENAKARLSELPSDIKSRIEIMAYDFFTPQPVKNADVYLLRTILHDWPDADAIKIIQGIVAAMGPSSRLLIMDMVLPKPGSGSVTFEAALRQKDLTMIQCFNAQEREVEEWKALLTKADPRLKIQAIERPAGSELSVIEAMLDESPEQAAWF.

Position 231 (aspartate 231) interacts with S-adenosyl-L-methionine. Histidine 280 acts as the Proton acceptor in catalysis.

It belongs to the class I-like SAM-binding methyltransferase superfamily. Cation-independent O-methyltransferase family. COMT subfamily.

The protein operates within polyketide biosynthesis. In terms of biological role, O-methyltransferase; part of the gene cluster that mediates the biosynthesis of fusarubins, highly pigmented naphthoquinones responsible for the coloration of the fruiting bodies. The non-reducing polyketide synthase FSR1 is responsible for the condensation of seven acetyl-CoA units to yield a haptaketide. After rings A and B are formed by aldol-type cyclization, the PKS-derived product is released as 6-O-demethylfusarubinaldehyde. Then, two hydroxyl groups at C-5 and C-10 are incorporated by FSR3, and simultaneously hydroxyl groups at C-6 and C-8 are methylated by FSR2. The aldehyde is, on the one hand, reduced by FSR3 to 8-O-methylfusarubin alcohol, which equilibrates mainly with 8-O-methylfusarubin and only small amounts of 8-O-methylnectriafurone. On the other hand, the aldehyde can be oxidized to form 8-O-methylfusarubinic acid, a reaction driven by FSR3 equilibrating with 8-O-methylfusarubinlactone, finally resulting in 8-O-methylanhydrofusarubinlactol after a further reduction step and loss of water. 8-O-Methylfusarubinic acid can also undergo decarboxylation, resulting in 8-O-methyl-13-hydroxynorjavanicin after another hydroxylation step at C-13. Both steps are most likely also accomplished by FSR3. No enzymatic function has been determined so far for either FSR4 and FSR5. Their deletion does not alter the product spectrum, but the possibility that they catalyze specific enzymatic steps during perithecium development cannot be ruled out. FSR4 might possess a regulatory function in the biosynthesis of fusarubins. The chain is O-methyltransferase fsr2 from Gibberella fujikuroi (strain CBS 195.34 / IMI 58289 / NRRL A-6831) (Bakanae and foot rot disease fungus).